A 424-amino-acid polypeptide reads, in one-letter code: D-inositol 3-phosphate glycosyltransferase (424 aa).

A 1D-myo-inositol 3-phosphate-binding site is contributed by H9. Residues 15–16 and G23 contribute to the UDP-N-acetyl-alpha-D-glucosamine site; that span reads QP. Residues 20 to 25, K78, Y110, T134, and R154 contribute to the 1D-myo-inositol 3-phosphate site; that span reads DSGGMN. R231, K236, and R294 together coordinate UDP-N-acetyl-alpha-D-glucosamine. Mg(2+) contacts are provided by Y303, R304, and A306. Positions 316 and 324 each coordinate UDP-N-acetyl-alpha-D-glucosamine. T330 lines the Mg(2+) pocket.

The protein belongs to the glycosyltransferase group 1 family. MshA subfamily. Homodimer.

It carries out the reaction 1D-myo-inositol 3-phosphate + UDP-N-acetyl-alpha-D-glucosamine = 1D-myo-inositol 2-acetamido-2-deoxy-alpha-D-glucopyranoside 3-phosphate + UDP + H(+). Catalyzes the transfer of a N-acetyl-glucosamine moiety to 1D-myo-inositol 3-phosphate to produce 1D-myo-inositol 2-acetamido-2-deoxy-glucopyranoside 3-phosphate in the mycothiol biosynthesis pathway. The sequence is that of D-inositol 3-phosphate glycosyltransferase from Corynebacterium efficiens (strain DSM 44549 / YS-314 / AJ 12310 / JCM 11189 / NBRC 100395).